A 147-amino-acid polypeptide reads, in one-letter code: Large ribosomal subunit protein bL9 (147 aa).

Belongs to the bacterial ribosomal protein bL9 family.

Functionally, binds to the 23S rRNA. The chain is Large ribosomal subunit protein bL9 from Bacteroides thetaiotaomicron (strain ATCC 29148 / DSM 2079 / JCM 5827 / CCUG 10774 / NCTC 10582 / VPI-5482 / E50).